The sequence spans 529 residues: Bifunctional purine biosynthesis protein PurH (529 aa).

Positions 2-149 (TDLHPVRRAL…KNHAFVNVVV (148 aa)) constitute an MGS-like domain.

The protein belongs to the PurH family.

The enzyme catalyses (6R)-10-formyltetrahydrofolate + 5-amino-1-(5-phospho-beta-D-ribosyl)imidazole-4-carboxamide = 5-formamido-1-(5-phospho-D-ribosyl)imidazole-4-carboxamide + (6S)-5,6,7,8-tetrahydrofolate. The catalysed reaction is IMP + H2O = 5-formamido-1-(5-phospho-D-ribosyl)imidazole-4-carboxamide. It participates in purine metabolism; IMP biosynthesis via de novo pathway; 5-formamido-1-(5-phospho-D-ribosyl)imidazole-4-carboxamide from 5-amino-1-(5-phospho-D-ribosyl)imidazole-4-carboxamide (10-formyl THF route): step 1/1. The protein operates within purine metabolism; IMP biosynthesis via de novo pathway; IMP from 5-formamido-1-(5-phospho-D-ribosyl)imidazole-4-carboxamide: step 1/1. This Ruegeria sp. (strain TM1040) (Silicibacter sp.) protein is Bifunctional purine biosynthesis protein PurH.